Consider the following 1460-residue polypeptide: Collagen alpha-1(I) chain (1460 aa).

Residues 1 to 22 (MFSFVDLRLLLLLAATALLTHG) form the signal peptide. Positions 23-157 (QEEGQEEDIP…PPGLGGNFAP (135 aa)) are cleaved as a propeptide — N-terminal propeptide. The 59-residue stretch at 34 to 92 (VTCVQNGLRYYDRDVWKPEACRICVCDNGNVLCDDVICDETKNCPGAQVPPGECCPVCP) folds into the VWFC domain. A disordered region spans residues 96–1213 (ASPTDQETTG…KAHDGGRYYR (1118 aa)). The segment covering 134–149 (PGLPGPPGPPGPPGPP) has biased composition (pro residues). Positions 158 to 174 (QMSYGYDEKSTGGISVP) are nonhelical region (N-terminal). Lys-166 is modified (allysine). Ser-167 is subject to Phosphoserine. A triple-helical region region spans residues 175–1188 (GPMGPSGPRG…PGPPGPPGPP (1014 aa)). Residues Pro-186, Pro-189, Pro-192, Pro-201, Pro-204, Pro-207, Pro-222, Pro-237, Pro-243, Pro-252, and Pro-258 each carry the 4-hydroxyproline modification. A compositionally biased stretch (low complexity) spans 194–213 (PQGFQGPPGEPGEPGASGPM). The segment covering 225–239 (NGDDGEAGKPGRPGE) has biased composition (basic and acidic residues). Position 261 is a 5-hydroxylysine; alternate (Lys-261). An O-linked (Gal...) hydroxylysine; alternate glycan is attached at Lys-261. A Phosphoserine modification is found at Ser-267. A compositionally biased stretch (low complexity) spans 275–291 (DAGPAGPKGEPGSPGEN). 5 positions are modified to 4-hydroxyproline: Pro-285, Pro-288, Pro-294, Pro-303, and Pro-309. The segment covering 314–327 (PAGARGNDGATGAA) has biased composition (low complexity). The segment covering 329-341 (PPGPTGPAGPPGF) has biased composition (pro residues). Residues Pro-330, Pro-339, Pro-342, Pro-369, Pro-372, Pro-384, Pro-390, Pro-399, Pro-405, Pro-408, and Pro-423 each carry the 4-hydroxyproline modification. A compositionally biased stretch (low complexity) spans 375–414 (AGAAGPAGNPGADGQPGAKGANGAPGIAGAPGFPGARGPS). Lys-426 is modified (5-hydroxylysine). A 4-hydroxyproline mark is found at Pro-432, Pro-435, Pro-447, Pro-456, Pro-471, Pro-477, Pro-486, and Pro-492. The span at 481–490 (GERGGPGSRG) shows a compositional bias: gly residues. A 5-hydroxylysine modification is found at Lys-501. A 4-hydroxyproline mark is found at Pro-510, Pro-519, Pro-525, Pro-531, Pro-540, Pro-543, Pro-552, Pro-561, Pro-567, Pro-579, Pro-588, Pro-597, Pro-600, Pro-618, Pro-636, Pro-642, Pro-648, Pro-654, Pro-660, Pro-666, Pro-678, Pro-687, Pro-699, Pro-711, Pro-714, Pro-720, Pro-726, and Pro-735. Positions 534–560 (KGLTGSPGSPGPDGKTGPPGPAGQDGR) are enriched in low complexity. A compositionally biased stretch (low complexity) spans 569-588 (ARGQAGVMGFPGPKGAAGEP). Positions 630-657 (QGPAGSPGFQGLPGPAGPPGEAGKPGEQ) are enriched in low complexity. The segment covering 692–720 (PRGANGAPGNDGAKGDAGAPGAPGSQGAP) has biased composition (low complexity). A Cell attachment site motif is present at residues 741-743 (RGD). Lys-747 is modified (5-hydroxylysine). 3 positions are modified to 4-hydroxyproline: Pro-753, Pro-768, and Pro-774. Over residues 780 to 794 (AGPSGPAGPTGARGA) the composition is skewed to low complexity. Residue Ser-783 is modified to Phosphoserine. 4-hydroxyproline occurs at positions 795, 801, 804, 813, 819, 837, 846, and 855. The segment covering 807 to 834 (AGFAGPPGADGQPGAKGEPGDAGAKGDA) has biased composition (low complexity). The segment covering 836–848 (PPGPAGPTGPPGP) has biased composition (pro residues). A 5-hydroxylysine modification is found at Lys-858. Low complexity predominate over residues 863–879 (SAGPPGATGFPGAAGRV). A 4-hydroxyproline mark is found at Pro-867 and Pro-873. Pro-881 bears the 3-hydroxyproline mark. 4-hydroxyproline is present on residues Pro-882, Pro-891, Pro-894, Pro-915, Pro-924, Pro-933, Pro-942, Pro-960, Pro-969, Pro-972, Pro-978, Pro-993, Pro-999, Pro-1005, Pro-1014, and Pro-1020. Residues 908 to 917 (ETGPAGRPGE) show a composition bias toward low complexity. The segment covering 927–951 (AGEKGSPGADGPAGAPGTPGPQGIA) has biased composition (low complexity). Residues 992 to 1002 (PPGPMGPPGLA) show a composition bias toward pro residues. The segment covering 1004 to 1019 (PPGESGREGSPGAEGS) has biased composition (low complexity). A 5-hydroxylysine modification is found at Lys-1029. Residues 1038–1053 (AGPPGAPGAPGAPGPV) are compositionally biased toward pro residues. 4-hydroxyproline occurs at positions 1041, 1044, and 1047. Over residues 1074-1088 (IGPVGARGPAGPQGP) the composition is skewed to low complexity. Positions 1089-1091 (RGD) match the Cell attachment site motif. Residues 1089-1103 (RGDKGETGEQGDRGI) show a composition bias toward basic and acidic residues. Position 1092 is a 5-hydroxylysine (Lys-1092). Lys-1104 is modified (5-hydroxylysine; alternate). A glycan (O-linked (Gal...) hydroxylysine; alternate) is linked at Lys-1104. 4-hydroxyproline occurs at positions 1116, 1119, 1122, 1140, and 1155. The span at 1122–1155 (PGEQGPSGASGPAGPRGPPGSAGSPGKDGLNGLP) shows a compositional bias: low complexity. The residue at position 1160 (Pro-1160) is a 3-hydroxyproline. Pro-1161 carries the 4-hydroxyproline modification. A compositionally biased stretch (pro residues) spans 1173 to 1188 (VGPPGPPGPPGPPGPP). Pro-1175 carries the 3-hydroxyproline modification. Pro-1176 is subject to 4-hydroxyproline. At Pro-1178 the chain carries 3-hydroxyproline. 4-hydroxyproline is present on Pro-1179. Pro-1181 is subject to 3-hydroxyproline. Pro-1182, Pro-1185, and Pro-1188 each carry 4-hydroxyproline. The nonhelical region (C-terminal) stretch occupies residues 1189–1214 (SGGFDFSFLPQPPQEKAHDGGRYYRA). The span at 1203 to 1213 (EKAHDGGRYYR) shows a compositional bias: basic and acidic residues. At Lys-1204 the chain carries Allysine. A propeptide spans 1215 to 1460 (DDANVVRDRD…GMDIGPVCFL (246 aa)) (C-terminal propeptide). In terms of domain architecture, Fibrillar collagen NC1 spans 1225-1460 (LEVDTTLKSL…GMDIGPVCFL (236 aa)). 3 cysteine pairs are disulfide-bonded: Cys-1255–Cys-1287, Cys-1295–Cys-1458, and Cys-1366–Cys-1411. Residues Asp-1273, Asn-1275, Gln-1276, Cys-1278, and Asp-1281 each coordinate Ca(2+). Asn-1361 carries N-linked (GlcNAc...) asparagine glycosylation.

It belongs to the fibrillar collagen family. In terms of assembly, trimers of one alpha 2(I) and two alpha 1(I) chains. Interacts with MRC2. Interacts with TRAM2. Interacts with MFAP4 in a Ca (2+)-dependent manner. Post-translationally, contains mostly 4-hydroxyproline. Proline residues at the third position of the tripeptide repeating unit (G-X-Y) are hydroxylated in some or all of the chains. Contains 3-hydroxyproline at a few sites. This modification occurs on the first proline residue in the sequence motif Gly-Pro-Hyp, where Hyp is 4-hydroxyproline. In terms of processing, lysine residues at the third position of the tripeptide repeating unit (G-X-Y) are 5-hydroxylated in some or all of the chains. Post-translationally, O-glycosylated on hydroxylated lysine residues. The O-linked glycan consists of a Glc-Gal disaccharide.

Its subcellular location is the secreted. It is found in the extracellular space. It localises to the extracellular matrix. Type I collagen is a member of group I collagen (fibrillar forming collagen). This Canis lupus familiaris (Dog) protein is Collagen alpha-1(I) chain (COL1A1).